A 398-amino-acid polypeptide reads, in one-letter code: Bifunctional enzyme IspD/IspF (398 aa).

The interval 1-234 (MPSSKRTAAI…ARLAAALGDI (234 aa)) is 2-C-methyl-D-erythritol 4-phosphate cytidylyltransferase. The interval 235-398 (RTGTGYDVHA…LPWNDKGRDT (164 aa)) is 2-C-methyl-D-erythritol 2,4-cyclodiphosphate synthase. The a divalent metal cation site is built by aspartate 241 and histidine 243. Residues 241 to 243 (DVH) and 267 to 268 (HS) contribute to the 4-CDP-2-C-methyl-D-erythritol 2-phosphate site. Residue histidine 275 coordinates a divalent metal cation. Residues 289–291 (DIG), 365–368 (TTSE), phenylalanine 372, and arginine 375 each bind 4-CDP-2-C-methyl-D-erythritol 2-phosphate.

It in the N-terminal section; belongs to the IspD/TarI cytidylyltransferase family. IspD subfamily. In the C-terminal section; belongs to the IspF family. Requires a divalent metal cation as cofactor.

The enzyme catalyses 2-C-methyl-D-erythritol 4-phosphate + CTP + H(+) = 4-CDP-2-C-methyl-D-erythritol + diphosphate. The catalysed reaction is 4-CDP-2-C-methyl-D-erythritol 2-phosphate = 2-C-methyl-D-erythritol 2,4-cyclic diphosphate + CMP. Its pathway is isoprenoid biosynthesis; isopentenyl diphosphate biosynthesis via DXP pathway; isopentenyl diphosphate from 1-deoxy-D-xylulose 5-phosphate: step 2/6. It functions in the pathway isoprenoid biosynthesis; isopentenyl diphosphate biosynthesis via DXP pathway; isopentenyl diphosphate from 1-deoxy-D-xylulose 5-phosphate: step 4/6. Bifunctional enzyme that catalyzes the formation of 4-diphosphocytidyl-2-C-methyl-D-erythritol from CTP and 2-C-methyl-D-erythritol 4-phosphate (MEP) (IspD), and catalyzes the conversion of 4-diphosphocytidyl-2-C-methyl-D-erythritol 2-phosphate (CDP-ME2P) to 2-C-methyl-D-erythritol 2,4-cyclodiphosphate (ME-CPP) with a corresponding release of cytidine 5-monophosphate (CMP) (IspF). In Nitrobacter winogradskyi (strain ATCC 25391 / DSM 10237 / CIP 104748 / NCIMB 11846 / Nb-255), this protein is Bifunctional enzyme IspD/IspF.